The chain runs to 369 residues: Ubiquinone biosynthesis O-methyltransferase, mitochondrial (369 aa).

The N-terminal 85 residues, M1–Y85, are a transit peptide targeting the mitochondrion. Residue R124 coordinates S-adenosyl-L-methionine. An N6-acetyllysine mark is found at K143 and K149. S-adenosyl-L-methionine is bound by residues G154 and D175. Residue K196 is modified to N6-acetyllysine. S222 provides a ligand contact to S-adenosyl-L-methionine. Residues E223, E226, and H227 each coordinate Mg(2+).

It belongs to the class I-like SAM-binding methyltransferase superfamily. UbiG/COQ3 family. In terms of assembly, component of a multi-subunit COQ enzyme complex, composed of at least COQ3, COQ4, COQ5, COQ6, COQ7 and COQ9. It depends on Mg(2+) as a cofactor.

It is found in the mitochondrion inner membrane. It carries out the reaction 3,4-dihydroxy-5-(all-trans-decaprenyl)benzoate + S-adenosyl-L-methionine = 4-hydroxy-3-methoxy-5-(all-trans-decaprenyl)benzoate + S-adenosyl-L-homocysteine + H(+). It catalyses the reaction a 3-demethylubiquinone + S-adenosyl-L-methionine = a ubiquinone + S-adenosyl-L-homocysteine. The catalysed reaction is 3-demethylubiquinol-10 + S-adenosyl-L-methionine = ubiquinol-10 + S-adenosyl-L-homocysteine + H(+). The protein operates within cofactor biosynthesis; ubiquinone biosynthesis. Functionally, O-methyltransferase required for two non-consecutive steps during ubiquinone biosynthesis. Catalyzes the 2 O-methylation of 3,4-dihydroxy-5-(all-trans-decaprenyl)benzoic acid into 4-hydroxy-3-methoxy-5-(all-trans-decaprenyl)benzoic acid. Also catalyzes the last step of ubiquinone biosynthesis by mediating methylation of 3-demethylubiquinone into ubiquinone. Also able to mediate the methylation of 3-demethylubiquinol-10 into ubiquinol-10. This chain is Ubiquinone biosynthesis O-methyltransferase, mitochondrial, found in Homo sapiens (Human).